Consider the following 392-residue polypeptide: tRNA-specific 2-thiouridylase MnmA (392 aa).

Residues 18-25 (AMSGGVDS) and Leu44 contribute to the ATP site. Cys112 (nucleophile) is an active-site residue. Cys112 and Cys208 are oxidised to a cystine. Residue Gly136 coordinates ATP. The tract at residues 158 to 160 (RDQ) is interaction with tRNA. Cys208 serves as the catalytic Cysteine persulfide intermediate.

It belongs to the MnmA/TRMU family.

It localises to the cytoplasm. It carries out the reaction S-sulfanyl-L-cysteinyl-[protein] + uridine(34) in tRNA + AH2 + ATP = 2-thiouridine(34) in tRNA + L-cysteinyl-[protein] + A + AMP + diphosphate + H(+). Catalyzes the 2-thiolation of uridine at the wobble position (U34) of tRNA, leading to the formation of s(2)U34. The sequence is that of tRNA-specific 2-thiouridylase MnmA from Rhodospirillum centenum (strain ATCC 51521 / SW).